A 464-amino-acid polypeptide reads, in one-letter code: Growth hormone-releasing hormone receptor (464 aa).

The signal sequence occupies residues 1-22 (MDSLLWATWVLCLLNLWGVALG). Over 23–130 (HLHLECDFIT…EEKSYFSTVK (108 aa)) the chain is Extracellular. Disulfide bonds link Cys-41/Cys-64, Cys-55/Cys-96, and Cys-78/Cys-112. N-linked (GlcNAc...) asparagine glycosylation is present at Asn-50. Residues 131–151 (IIYTTGHSISIVALCVAIAIL) traverse the membrane as a helical segment. Topologically, residues 152 to 167 (VALRRLHCPRNYIHTQ) are cytoplasmic. Residues 168–188 (LFATFILKASAVFLKDAAVFQ) form a helical membrane-spanning segment. Residues 189–210 (GDSTDHCSMSTILCKVSVAVSH) are Extracellular-facing. A helical transmembrane segment spans residues 211-231 (FATMTNFSWLLAEAVYLSCLL). The Cytoplasmic segment spans residues 232-240 (ASTSPRSKP). A helical membrane pass occupies residues 241–261 (AFWWLVLAGWGLPVLCTGTWV). The Extracellular portion of the chain corresponds to 262 to 283 (GCKLAFEDTACWDLDDSSPYWW). Residues 284 to 304 (IIKGPIVLSVGVNFGLFLNII) form a helical membrane-spanning segment. The Cytoplasmic segment spans residues 305-372 (CILLRKLGPA…QLPWRLSKST (68 aa)). The helical transmembrane segment at 373 to 393 (LLLIPLFGIHYIIFNFLPDSA) threads the bilayer. Residues 394-398 (GLGIR) are Extracellular-facing. Residues 399–419 (LPLELGLGSFQGFVVAVLYCF) form a helical membrane-spanning segment. Residues 420–464 (LNQEVRTEISRKWYGHDPELLPARRTCTEWTTPPRSRVKVLTSEC) are Cytoplasmic-facing.

Belongs to the G-protein coupled receptor 2 family. As to expression, pituitary gland.

The protein resides in the cell membrane. Receptor for GRF, coupled to G proteins which activate adenylyl cyclase. Stimulates somatotroph cell growth, growth hormone gene transcription and growth hormone secretion. The polypeptide is Growth hormone-releasing hormone receptor (Ghrhr) (Rattus norvegicus (Rat)).